The following is a 368-amino-acid chain: 3-dehydroquinate synthase (368 aa).

NAD(+)-binding positions include 99 to 103 (GVVGD), 123 to 124 (TT), Lys-136, and Lys-145. Residues Glu-178, His-242, and His-259 each coordinate Zn(2+).

Belongs to the sugar phosphate cyclases superfamily. Dehydroquinate synthase family. NAD(+) is required as a cofactor. It depends on Co(2+) as a cofactor. Zn(2+) serves as cofactor.

It localises to the cytoplasm. The catalysed reaction is 7-phospho-2-dehydro-3-deoxy-D-arabino-heptonate = 3-dehydroquinate + phosphate. It participates in metabolic intermediate biosynthesis; chorismate biosynthesis; chorismate from D-erythrose 4-phosphate and phosphoenolpyruvate: step 2/7. Functionally, catalyzes the conversion of 3-deoxy-D-arabino-heptulosonate 7-phosphate (DAHP) to dehydroquinate (DHQ). The sequence is that of 3-dehydroquinate synthase from Chlorobaculum tepidum (strain ATCC 49652 / DSM 12025 / NBRC 103806 / TLS) (Chlorobium tepidum).